A 245-amino-acid polypeptide reads, in one-letter code: Carboxymethylenebutenolidase homolog (245 aa).

N-acetylalanine is present on A2. K36 bears the N6-acetyllysine mark. Residues C132, D179, and H212 contribute to the active site. S223 carries the post-translational modification Phosphoserine.

This sequence belongs to the dienelactone hydrolase family.

The protein localises to the cytoplasm. It is found in the cytosol. Its function is as follows. Cysteine hydrolase. This is Carboxymethylenebutenolidase homolog (CMBL) from Pongo abelii (Sumatran orangutan).